The primary structure comprises 427 residues: Thymidine phosphorylase (427 aa).

The protein belongs to the thymidine/pyrimidine-nucleoside phosphorylase family. As to quaternary structure, homodimer.

It catalyses the reaction thymidine + phosphate = 2-deoxy-alpha-D-ribose 1-phosphate + thymine. Its function is as follows. The enzymes which catalyze the reversible phosphorolysis of pyrimidine nucleosides are involved in the degradation of these compounds and in their utilization as carbon and energy sources, or in the rescue of pyrimidine bases for nucleotide synthesis. The sequence is that of Thymidine phosphorylase (deoA) from Mycobacterium tuberculosis (strain CDC 1551 / Oshkosh).